The primary structure comprises 635 residues: Sodium- and chloride-dependent creatine transporter 1 (635 aa).

Positions 1–27 are disordered; that stretch reads MAKKSAENGIYSVSGDEKKGPLIVSGP. Residues 1 to 60 lie on the Cytoplasmic side of the membrane; that stretch reads MAKKSAENGIYSVSGDEKKGPLIVSGPDGAPAKGDGPAGLGAPGGRLAVPPRETWTRQMD. Residues 61–81 traverse the membrane as a helical segment; sequence FIMSCVGFAVGLGNVWRFPYL. Over 82 to 87 the chain is Extracellular; the sequence is CYKNGG. The helical transmembrane segment at 88–108 threads the bilayer; that stretch reads GVFLIPYVLIALVGGIPIFFL. The Cytoplasmic segment spans residues 109–138; the sequence is EISLGQFMKAGSINVWNICPLFKGLGYASM. The chain crosses the membrane as a helical span at residues 139–159; the sequence is VIVFYCNTYYIMVLAWGFYYL. Residues 160 to 230 lie on the Extracellular side of the membrane; it reads VKSFTTTLPW…LSTGLEVPGA (71 aa). N-linked (GlcNAc...) asparagine glycans are attached at residues asparagine 192 and asparagine 197. The chain crosses the membrane as a helical span at residues 231-251; that stretch reads LNWEVTLCLLACWVLVYFCVW. At 252 to 269 the chain is on the cytoplasmic side; that stretch reads KGVKSTGKIVYFTATFPY. Residues 270 to 290 traverse the membrane as a helical segment; sequence VVLVVLLVRGVLLPGALDGII. Residues 291 to 304 are Extracellular-facing; the sequence is YYLKPDWSKLGSPQ. A helical transmembrane segment spans residues 305–325; that stretch reads VWIDAGTQIFFSYAIGLGALT. Residues 326-341 lie on the Cytoplasmic side of the membrane; sequence ALGSYNRFNNNCYKDA. The helical transmembrane segment at 342 to 362 threads the bilayer; that stretch reads IILALINSGTSFFAGFVVFSI. At 363–394 the chain is on the extracellular side; it reads LGFMATEQGVHISKVAESGPGLAFIAYPRAVT. The chain crosses the membrane as a helical span at residues 395 to 415; sequence LMPVAPLWAALFFFMLLLLGL. At 416 to 444 the chain is on the cytoplasmic side; it reads DSQFVGVEGFITGLLDLLPASYYFRFQRE. The chain crosses the membrane as a helical span at residues 445 to 465; the sequence is ISVALCCALCFVIDLSMVTDG. Residues 466–479 lie on the Extracellular side of the membrane; the sequence is GMYVFQLFDYYSAS. The chain crosses the membrane as a helical span at residues 480-500; sequence GTTLLWQAFWECVVVAWVYGA. Topologically, residues 501–520 are cytoplasmic; it reads DRFMDDIACMIGYRPCPWMK. Residues 521-541 form a helical membrane-spanning segment; sequence WCWSFFTPLVCMGIFIFNIVY. Residues 542–560 lie on the Extracellular side of the membrane; sequence YEPLVYNNTYVYPWWGEAM. N-linked (GlcNAc...) asparagine glycosylation occurs at asparagine 548. A helical transmembrane segment spans residues 561–581; sequence GWAFALSSMLCVPLHLLGCLL. At 582–635 the chain is on the cytoplasmic side; it reads RAKGTMAERWQHLTQPIWGLHHLEYRAQDADVRGLTTLTPVSESSKVVVVESVM. Threonine 617 and threonine 620 each carry phosphothreonine. The residue at position 623 (serine 623) is a Phosphoserine.

It belongs to the sodium:neurotransmitter symporter (SNF) (TC 2.A.22) family. SLC6A8 subfamily. In terms of processing, glycosylated. As to expression, brain. Highly expressed in brain capillaries branching in all cortical layers and moderately expressed in neuronal perikarya (at protein level).

The protein resides in the cell membrane. Its subcellular location is the apical cell membrane. It catalyses the reaction creatine(out) + chloride(out) + 2 Na(+)(out) = creatine(in) + chloride(in) + 2 Na(+)(in). Its function is as follows. Creatine:sodium symporter which mediates the uptake of creatine. Plays an important role in supplying creatine to the brain via the blood-brain barrier. The polypeptide is Sodium- and chloride-dependent creatine transporter 1 (Slc6a8) (Mus musculus (Mouse)).